Consider the following 231-residue polypeptide: MNKWNYGVFFVNFYNKGQQEPSKTMNNALETLRIIDEDTSIYDVINIDDHYLVKKDSEDKKLASFITLGEKLYVLATSENTVDIAAKYALPLVFKWDDINEERLKLLSFYNASASKYNKNIDLVRHQLMLHVNVNEAETVAKEELKLYIENYVACTQPSNFNGSIDSIIQSNVTGSYKDCLSYVANLAGKFDNTVDFLLCFESMQDQNKKKSVMIDLNNQVIKFRQDNNLI.

Belongs to the bacterial luciferase oxidoreductase family. Homodimer. Requires FMN as cofactor.

The polypeptide is Non-fluorescent flavoprotein (luxF) (Photobacterium phosphoreum).